Consider the following 477-residue polypeptide: MKVTLPEFERAGVMVVGDVMLDRYWYGPTSRISPEAPVPVVKVNTIEERPGGAANVAMNIASLGANARLVGLTGIDDAARALSKSLADVNVKCDFVSVPTHPTITKLRVLSRNQQLIRLDFEEGFEGVDPQPLHERINQALSSIGALVLSDYAKGALASVQQMIQLARKAGVPVLIDPKGTDFERYRGATLLTPNLSEFEAVVGKCKTEEEIVERGMKLIADYELSALLVTRSEQGMSLLQPGKEPLHMPTQAQEVYDVTGAGDTVIGVLAATLAAGNSLEEACFFANAAAGVVVGKLGTSTVSPIELENAVRGRADTGFGVMTEEELKLAVAAARKRGEKVVMTNGVFDILHAGHVSYLANARKLGDRLIVAVNSDASTKRLKGDSRPVNPLEQRMIVLGALEAVDWVVSFEEDTPQRLIAGILPDLLVKGGDYKPEEIAGSKEVWANGGEVLVLNFEDGCSTTNIIKKIQQDKKG.

The ribokinase stretch occupies residues 1 to 318 (MKVTLPEFER…ENAVRGRADT (318 aa)). Lys-179 carries the post-translational modification N6-acetyllysine. 195-198 (NLSE) serves as a coordination point for ATP. The active site involves Asp-264. Residues 344 to 477 (MTNGVFDILH…IKKIQQDKKG (134 aa)) are cytidylyltransferase.

The protein in the N-terminal section; belongs to the carbohydrate kinase PfkB family. In the C-terminal section; belongs to the cytidylyltransferase family. In terms of assembly, homodimer.

The enzyme catalyses D-glycero-beta-D-manno-heptose 7-phosphate + ATP = D-glycero-beta-D-manno-heptose 1,7-bisphosphate + ADP + H(+). The catalysed reaction is D-glycero-beta-D-manno-heptose 1-phosphate + ATP + H(+) = ADP-D-glycero-beta-D-manno-heptose + diphosphate. The protein operates within nucleotide-sugar biosynthesis; ADP-L-glycero-beta-D-manno-heptose biosynthesis; ADP-L-glycero-beta-D-manno-heptose from D-glycero-beta-D-manno-heptose 7-phosphate: step 1/4. It functions in the pathway nucleotide-sugar biosynthesis; ADP-L-glycero-beta-D-manno-heptose biosynthesis; ADP-L-glycero-beta-D-manno-heptose from D-glycero-beta-D-manno-heptose 7-phosphate: step 3/4. Its function is as follows. Catalyzes the phosphorylation of D-glycero-D-manno-heptose 7-phosphate at the C-1 position to selectively form D-glycero-beta-D-manno-heptose-1,7-bisphosphate. In terms of biological role, catalyzes the ADP transfer from ATP to D-glycero-beta-D-manno-heptose 1-phosphate, yielding ADP-D-glycero-beta-D-manno-heptose. In Escherichia fergusonii (strain ATCC 35469 / DSM 13698 / CCUG 18766 / IAM 14443 / JCM 21226 / LMG 7866 / NBRC 102419 / NCTC 12128 / CDC 0568-73), this protein is Bifunctional protein HldE.